The primary structure comprises 283 residues: tRNA-cytidine(32) 2-sulfurtransferase (283 aa).

A PP-loop motif motif is present at residues 37–42; that stretch reads SGGKDS. [4Fe-4S] cluster is bound by residues Cys112, Cys115, and Cys203.

This sequence belongs to the TtcA family. In terms of assembly, homodimer. The cofactor is Mg(2+). It depends on [4Fe-4S] cluster as a cofactor.

It localises to the cytoplasm. It carries out the reaction cytidine(32) in tRNA + S-sulfanyl-L-cysteinyl-[cysteine desulfurase] + AH2 + ATP = 2-thiocytidine(32) in tRNA + L-cysteinyl-[cysteine desulfurase] + A + AMP + diphosphate + H(+). Its pathway is tRNA modification. Functionally, catalyzes the ATP-dependent 2-thiolation of cytidine in position 32 of tRNA, to form 2-thiocytidine (s(2)C32). The sulfur atoms are provided by the cysteine/cysteine desulfurase (IscS) system. This chain is tRNA-cytidine(32) 2-sulfurtransferase, found in Legionella pneumophila (strain Corby).